The sequence spans 301 residues: Amine sulfotransferase (301 aa).

46-51 (KSGTVW) serves as a coordination point for 3'-phosphoadenylyl sulfate. H101 acts as the Proton acceptor in catalysis. 3'-phosphoadenylyl sulfate-binding positions include R123, S131, Y186, 220 to 225 (ATFENM), and 252 to 254 (RKG).

Belongs to the sulfotransferase 1 family. As to expression, expressed in male liver.

It localises to the cytoplasm. It carries out the reaction a primary amine + 3'-phosphoadenylyl sulfate = a sulfamate + adenosine 3',5'-bisphosphate + 2 H(+). Sulfotransferase that utilizes 3'-phospho-5'-adenylyl sulfate (PAPS) as sulfonate donor to catalyze the N-sulfonation of amines (PTHP, aniline, 4-chloroaniline, 2-naphthylamine). In Oryctolagus cuniculus (Rabbit), this protein is Amine sulfotransferase (SULT3A1).